Reading from the N-terminus, the 173-residue chain is Archaemetzincin (173 aa).

Residue H130 coordinates Zn(2+). Residue E131 is the Proton acceptor of the active site. Residues H134, H140, C141, C146, C165, and C168 each coordinate Zn(2+).

The protein belongs to the peptidase M54 family. In terms of assembly, monomer. Zn(2+) serves as cofactor.

Functionally, probable zinc metalloprotease whose natural substrate is unknown. In Haloquadratum walsbyi (strain DSM 16790 / HBSQ001), this protein is Archaemetzincin.